Consider the following 816-residue polypeptide: Phosphatidylinositol 4-kinase beta (816 aa).

The disordered stretch occupies residues 1 to 30 (MGDTVVEPAPLKPTSEPTSGPPGNNGGSLL). Gly2 bears the N-acetylglycine mark. One can recognise a PIK helical domain in the interval 29–242 (LLSVITEGVG…GTKLRKLILS (214 aa)). The interval 41–67 (SVIDPEVAQKACQEVLEKVKLLHGGVA) is interaction with ACBD3. Disordered regions lie at residues 101–120 (EDEM…RRRR) and 248–318 (AHRK…SFSS). Ser258 bears the Phosphoserine mark. Thr263 is subject to Phosphothreonine. 5 positions are modified to phosphoserine: Ser266, Ser275, Ser277, Ser284, and Ser294. Composition is skewed to polar residues over residues 278 to 297 (DATA…SNPK) and 306 to 318 (SSST…SFSS). Ser428 carries the phosphoserine modification. At Thr438 the chain carries Phosphothreonine. Ser511 is subject to Phosphoserine. Residues Thr517 and Thr519 each carry the phosphothreonine modification. Residues 535 to 801 (EPWQEKVRRI…MVDGSMRSIT (267 aa)) enclose the PI3K/PI4K catalytic domain. The G-loop stretch occupies residues 541–547 (VRRIREG). Positions 668-676 (QVKDRHNGN) are catalytic loop. Residues 687–711 (HIDFGFILSSSPRNLGFETSAFKLT) are activation loop.

It belongs to the PI3/PI4-kinase family. Type III PI4K subfamily. Interacts with ARF1 and ARF3 in the Golgi complex, but not with ARF4, ARF5 or ARF6. Interacts with NCS1/FREQ in a calcium-independent manner. Interacts with CALN1/CABP8 and CALN2/CABP7; in a calcium-dependent manner; this interaction competes with NCS1/FREQ binding. Interacts with ACBD3. Interacts with ARMH3, YWHAB, YWHAE, YWHAG, YWHAH, YWHAQ, YWHAZ and SFN. Interacts with GGA2 (via VHS domain); the interaction is important for PI4KB location at the Golgi apparatus membrane. Interacts with ATG9A. In terms of assembly, (Microbial infection) Interacts with Aichi virus protein 3A. Part of a complex Aichi virus protein 3A/ACBD3/PI4KB that allows the synthesis of PI4P at the viral RNA replication sites. The cofactor is Mg(2+). Mn(2+) serves as cofactor. As to expression, widely expressed with highest levels in heart, skeletal muscle, pancreas, testis and ovary. Weakly expressed in liver. Expressed in the innear ear in the epithelium of the spinal organ of corti.

It is found in the endomembrane system. It localises to the mitochondrion outer membrane. The protein resides in the rough endoplasmic reticulum membrane. Its subcellular location is the golgi apparatus. The protein localises to the golgi apparatus membrane. It is found in the cytoplasm. It localises to the perinuclear region. It carries out the reaction a 1,2-diacyl-sn-glycero-3-phospho-(1D-myo-inositol) + ATP = a 1,2-diacyl-sn-glycero-3-phospho-(1D-myo-inositol 4-phosphate) + ADP + H(+). Inhibited by wortmannin and adenosine. Increased kinase activity upon interaction with NCS1/FREQ. Its activity is regulated as follows. (Microbial infection) Activated by Aichi virus protein 3A, this activation is sensitized by ACBD3. In terms of biological role, phosphorylates phosphatidylinositol (PI) in the first committed step in the production of the second messenger inositol-1,4,5,-trisphosphate (PIP). May regulate Golgi disintegration/reorganization during mitosis, possibly via its phosphorylation. Involved in Golgi-to-plasma membrane trafficking. May play an important role in the inner ear development. Functionally, (Microbial infection) Plays an essential role in Aichi virus RNA replication. Recruited by ACBD3 at the viral replication sites. (Microbial infection) Required for cellular spike-mediated entry of human coronavirus SARS-CoV. This chain is Phosphatidylinositol 4-kinase beta, found in Homo sapiens (Human).